The sequence spans 413 residues: DNA polymerase IV 1 (413 aa).

The UmuC domain occupies 7–188 (IFHVDMNSFY…LPIEEMYGIG (182 aa)). Aspartate 11 and aspartate 107 together coordinate Mg(2+). The active site involves glutamate 108.

This sequence belongs to the DNA polymerase type-Y family. Monomer. Requires Mg(2+) as cofactor.

It is found in the cytoplasm. It carries out the reaction DNA(n) + a 2'-deoxyribonucleoside 5'-triphosphate = DNA(n+1) + diphosphate. Functionally, poorly processive, error-prone DNA polymerase involved in untargeted mutagenesis. Copies undamaged DNA at stalled replication forks, which arise in vivo from mismatched or misaligned primer ends. These misaligned primers can be extended by PolIV. Exhibits no 3'-5' exonuclease (proofreading) activity. May be involved in translesional synthesis, in conjunction with the beta clamp from PolIII. This is DNA polymerase IV 1 (dinB1) from Halalkalibacterium halodurans (strain ATCC BAA-125 / DSM 18197 / FERM 7344 / JCM 9153 / C-125) (Bacillus halodurans).